Consider the following 291-residue polypeptide: Small ribosomal subunit protein uS2 (291 aa).

The segment at 255-291 is disordered; sequence AGAATGEWSEAQGAQWETGTGAPAADWAAEPAKESSW.

It belongs to the universal ribosomal protein uS2 family. In terms of assembly, component of the small ribosomal subunit. Mature ribosomes consist of a small (40S) and a large (60S) subunit. The 40S subunit contains about 33 different proteins and 1 molecule of RNA (18S). The 60S subunit contains about 49 different proteins and 3 molecules of RNA (25S, 5.8S and 5S). Interacts with RPS21.

It is found in the cytoplasm. In terms of biological role, required for the assembly and/or stability of the 40S ribosomal subunit. Required for the processing of the 20S rRNA-precursor to mature 18S rRNA in a late step of the maturation of 40S ribosomal subunits. The sequence is that of Small ribosomal subunit protein uS2 from Podospora anserina (strain S / ATCC MYA-4624 / DSM 980 / FGSC 10383) (Pleurage anserina).